A 460-amino-acid polypeptide reads, in one-letter code: Kynureninase (460 aa).

Pyridoxal 5'-phosphate is bound by residues L116, T117, F144–D147, S199, D228, H231, and Y253. K254 carries the post-translational modification N6-(pyridoxal phosphate)lysine. Residues W288 and N316 each contribute to the pyridoxal 5'-phosphate site.

This sequence belongs to the kynureninase family. As to quaternary structure, homodimer. The cofactor is pyridoxal 5'-phosphate.

The protein resides in the cytoplasm. The enzyme catalyses L-kynurenine + H2O = anthranilate + L-alanine + H(+). It carries out the reaction 3-hydroxy-L-kynurenine + H2O = 3-hydroxyanthranilate + L-alanine + H(+). The protein operates within amino-acid degradation; L-kynurenine degradation; L-alanine and anthranilate from L-kynurenine: step 1/1. It functions in the pathway cofactor biosynthesis; NAD(+) biosynthesis; quinolinate from L-kynurenine: step 2/3. Functionally, catalyzes the cleavage of L-kynurenine (L-Kyn) and L-3-hydroxykynurenine (L-3OHKyn) into anthranilic acid (AA) and 3-hydroxyanthranilic acid (3-OHAA), respectively. In Debaryomyces hansenii (strain ATCC 36239 / CBS 767 / BCRC 21394 / JCM 1990 / NBRC 0083 / IGC 2968) (Yeast), this protein is Kynureninase.